The chain runs to 319 residues: Melanoma-associated antigen B2 (319 aa).

Positions 1–17 (MPRGQKSKLRAREKRRK) are enriched in basic residues. The interval 1 to 112 (MPRGQKSKLR…TKSPSEDPLT (112 aa)) is disordered. Low complexity-rich tracts occupy residues 39–57 (PCCS…PAAG), 67–79 (TTAA…VSST), and 94–105 (ASSSQASTSTKS). 2 positions are modified to phosphoserine: Ser-77 and Ser-105. The region spanning 111–310 (LTRKSGSLVQ…CAFPTHYEEA (200 aa)) is the MAGE domain.

In terms of assembly, interacts with TRIM28. In terms of tissue distribution, expressed in testis and placenta, and in a significant fraction of tumors of various histologic types.

In terms of biological role, may enhance ubiquitin ligase activity of RING-type zinc finger-containing E3 ubiquitin-protein ligases. Proposed to act through recruitment and/or stabilization of the Ubl-conjugating enzyme (E2) at the E3:substrate complex. The chain is Melanoma-associated antigen B2 (MAGEB2) from Homo sapiens (Human).